A 299-amino-acid chain; its full sequence is MAAAEEDYGVGAEADRELEELLESALDDFDKAKPSPAPPSTTTAPDASGPQKRSPGDTAKDSLFASQEKFFQELFDSELASQATAEFEKAMKELAEEEPHLVEQFQKLSEAAGRVGSDMTSQQEFTSCLKETLSGLAKNATDLQNSGMSEEELTKAMEGLGMDEGDGEGNILPIMQSIMQNLLSKDVLYPSLKEITEKYPEWLQSHRESLPPEQFEKYQEQHSVMCKICEQFEAETPTDSETTQKARFEMVLDLMQQLQDLGHPPKELAGEMPPGLNFDLDALNLSGPPGASGEQCLIM.

Positions 1–63 are disordered; it reads MAAAEEDYGV…SPGDTAKDSL (63 aa). A2 carries the post-translational modification N-acetylalanine. The segment at 2–56 is docking to the peroxisome membrane and binding to PEX3; the sequence is AAAEEDYGVGAEADRELEELLESALDDFDKAKPSPAPPSTTTAPDASGPQKRSPG. Residues 2-91 form a necessary for PEX19 function on peroxisome biogenesis region; that stretch reads AAAEEDYGVG…QATAEFEKAM (90 aa). Residues 16-27 are compositionally biased toward acidic residues; that stretch reads RELEELLESALD. 3 positions are modified to phosphoserine: S35, S54, and S66. Residue T236 is modified to Phosphothreonine. Position 296 is a cysteine methyl ester (C296). The S-farnesyl cysteine moiety is linked to residue C296. Residues 297-299 constitute a propeptide, removed in mature form; sequence LIM.

Belongs to the peroxin-19 family. Interacts with a broad range of peroxisomal membrane proteins, including PEX3, PEX10, PEX11A, PEX11B, PEX12, PEX13, PEX14 and PEX16, PXMP2/PMP22, PXMP4/PMP24, SLC25A17/PMP34, ABCD1/ALDP, ABCD2/ALDRP, and ABCD3/PMP70. Also interacts with the tumor suppressor CDKN2A/p19ARF.

Its subcellular location is the cytoplasm. The protein localises to the peroxisome membrane. Its function is as follows. Necessary for early peroxisomal biogenesis. Acts both as a cytosolic chaperone and as an import receptor for peroxisomal membrane proteins (PMPs). Binds and stabilizes newly synthesized PMPs in the cytoplasm by interacting with their hydrophobic membrane-spanning domains, and targets them to the peroxisome membrane by binding to the integral membrane protein PEX3. Excludes CDKN2A from the nucleus and prevents its interaction with MDM2, which results in active degradation of TP53. This is Peroxisomal biogenesis factor 19 (PEX19) from Pongo abelii (Sumatran orangutan).